Reading from the N-terminus, the 425-residue chain is Glutamyl-tRNA(Gln) amidotransferase subunit A (425 aa).

Catalysis depends on charge relay system residues lysine 29 and serine 104. Serine 128 (acyl-ester intermediate) is an active-site residue.

This sequence belongs to the amidase family. GatA subfamily. Heterotrimer of A, B and C subunits.

The catalysed reaction is L-glutamyl-tRNA(Gln) + L-glutamine + ATP + H2O = L-glutaminyl-tRNA(Gln) + L-glutamate + ADP + phosphate + H(+). Functionally, allows the formation of correctly charged Gln-tRNA(Gln) through the transamidation of misacylated Glu-tRNA(Gln) in organisms which lack glutaminyl-tRNA synthetase. The reaction takes place in the presence of glutamine and ATP through an activated gamma-phospho-Glu-tRNA(Gln). In Haloarcula marismortui (strain ATCC 43049 / DSM 3752 / JCM 8966 / VKM B-1809) (Halobacterium marismortui), this protein is Glutamyl-tRNA(Gln) amidotransferase subunit A.